A 502-amino-acid polypeptide reads, in one-letter code: uncharacterized protein (502 aa).

3 stretches are compositionally biased toward low complexity: residues 1–10 (MQSTTNNNTN), 28–47 (SNRS…NNLS), and 155–171 (NTED…SVNS). Disordered regions lie at residues 1–57 (MQST…VISY), 155–181 (NTED…LSAR), 212–362 (SLGN…TDKF), and 438–487 (TIDQ…TSNL). Over residues 212–230 (SLGNSERNSPDRPSTQGDS) the composition is skewed to polar residues. 2 stretches are compositionally biased toward low complexity: residues 242-290 (RNAS…SSRN) and 309-327 (SNKN…TSIK). The span at 339–348 (QTNKSKNQRG) shows a compositional bias: polar residues. A compositionally biased stretch (low complexity) spans 446–460 (TSDKNNSTKSNTKYN). Positions 470 to 487 (SYGTSKRSHNRSSNTSNL) are enriched in polar residues.

It is found in the virion. This is an uncharacterized protein from Acanthamoeba polyphaga (Amoeba).